The chain runs to 127 residues: uncharacterized protein (127 aa).

A compositionally biased stretch (polar residues) spans 1-13 (MEAGNRSGTPQHR). The tract at residues 1–26 (MEAGNRSGTPQHRQLSEIRQDLSSSP) is disordered.

This is an uncharacterized protein from Saccharomyces cerevisiae (strain ATCC 204508 / S288c) (Baker's yeast).